A 327-amino-acid chain; its full sequence is Ribonucleoside-diphosphate reductase small chain (327 aa).

The Fe cation site is built by D70, E101, and H104. Y108 is an active-site residue. Residues E164, E198, and H201 each contribute to the Fe cation site.

The protein belongs to the ribonucleoside diphosphate reductase small chain family. Heterotetramer composed of a homodimer of the large subunit (R1) and a homodimer of the small subunit (R2). Larger multisubunit protein complex are also active, composed of (R1)n(R2)n. Requires Fe cation as cofactor.

It carries out the reaction a 2'-deoxyribonucleoside 5'-diphosphate + [thioredoxin]-disulfide + H2O = a ribonucleoside 5'-diphosphate + [thioredoxin]-dithiol. Functionally, ribonucleoside-diphosphate reductase holoenzyme provides the precursors necessary for viral DNA synthesis. Allows virus growth in non-dividing cells. Catalyzes the biosynthesis of deoxyribonucleotides from the corresponding ribonucleotides. In African swine fever virus (isolate Tick/South Africa/Pretoriuskop Pr4/1996) (ASFV), this protein is Ribonucleoside-diphosphate reductase small chain.